A 356-amino-acid polypeptide reads, in one-letter code: Holliday junction branch migration complex subunit RuvB (356 aa).

The tract at residues 13 to 197 (LPPARRMLSA…FGIVARLEFY (185 aa)) is large ATPase domain (RuvB-L). ATP-binding positions include Leu-36, Arg-37, Gly-78, Lys-81, Thr-82, Thr-83, 144 to 146 (EDY), Arg-187, Tyr-197, and Arg-234. Thr-82 contacts Mg(2+). The small ATPAse domain (RuvB-S) stretch occupies residues 198 to 268 (TPEELARIVK…IANRALAMLD (71 aa)). The head domain (RuvB-H) stretch occupies residues 271 to 356 (PQGFDLMDRK…RGNAENLFEE (86 aa)). Residues Arg-326 and Arg-331 each coordinate DNA.

Belongs to the RuvB family. As to quaternary structure, homohexamer. Forms an RuvA(8)-RuvB(12)-Holliday junction (HJ) complex. HJ DNA is sandwiched between 2 RuvA tetramers; dsDNA enters through RuvA and exits via RuvB. An RuvB hexamer assembles on each DNA strand where it exits the tetramer. Each RuvB hexamer is contacted by two RuvA subunits (via domain III) on 2 adjacent RuvB subunits; this complex drives branch migration. In the full resolvosome a probable DNA-RuvA(4)-RuvB(12)-RuvC(2) complex forms which resolves the HJ.

It localises to the cytoplasm. The catalysed reaction is ATP + H2O = ADP + phosphate + H(+). The RuvA-RuvB-RuvC complex processes Holliday junction (HJ) DNA during genetic recombination and DNA repair, while the RuvA-RuvB complex plays an important role in the rescue of blocked DNA replication forks via replication fork reversal (RFR). RuvA specifically binds to HJ cruciform DNA, conferring on it an open structure. The RuvB hexamer acts as an ATP-dependent pump, pulling dsDNA into and through the RuvAB complex. RuvB forms 2 homohexamers on either side of HJ DNA bound by 1 or 2 RuvA tetramers; 4 subunits per hexamer contact DNA at a time. Coordinated motions by a converter formed by DNA-disengaged RuvB subunits stimulates ATP hydrolysis and nucleotide exchange. Immobilization of the converter enables RuvB to convert the ATP-contained energy into a lever motion, pulling 2 nucleotides of DNA out of the RuvA tetramer per ATP hydrolyzed, thus driving DNA branch migration. The RuvB motors rotate together with the DNA substrate, which together with the progressing nucleotide cycle form the mechanistic basis for DNA recombination by continuous HJ branch migration. Branch migration allows RuvC to scan DNA until it finds its consensus sequence, where it cleaves and resolves cruciform DNA. This Polaromonas naphthalenivorans (strain CJ2) protein is Holliday junction branch migration complex subunit RuvB.